Consider the following 259-residue polypeptide: DNA terminal protein (259 aa).

At Tyr-190 the chain carries O-(5'-phospho-DNA)-tyrosine. Positions 243-259 (KKKYKRRQKRGYGSKGV) match the Nuclear localization signal motif.

Belongs to the tectivirus DNA terminal protein family. As to quaternary structure, heterodimer with viral polymerase. Binds to ssDNA.

The protein localises to the virion. Its subcellular location is the host nucleus. Acts as a primer for viral genomic replication. DNA terminal protein is covalently linked to the 5'-ends of both strands of the genome through a phosphodiester bond between the beta-hydroxyl group of a tyrosine residue and the 5'-phosphate of the terminal deoxyadenylate. This protein is essential for DNA replication and is involved in the priming of DNA elongation. The polypeptide is DNA terminal protein (VIII) (Enterobacteria phage PRD1 (Bacteriophage PRD1)).